The following is a 138-amino-acid chain: Transcription antitermination protein NusB (138 aa).

This sequence belongs to the NusB family.

Its function is as follows. Involved in transcription antitermination. Required for transcription of ribosomal RNA (rRNA) genes. Binds specifically to the boxA antiterminator sequence of the ribosomal RNA (rrn) operons. The protein is Transcription antitermination protein NusB of Colwellia psychrerythraea (strain 34H / ATCC BAA-681) (Vibrio psychroerythus).